The following is a 950-amino-acid chain: Glycine dehydrogenase (decarboxylating) (950 aa).

N6-(pyridoxal phosphate)lysine is present on Lys699.

It belongs to the GcvP family. In terms of assembly, the glycine cleavage system is composed of four proteins: P, T, L and H. Pyridoxal 5'-phosphate serves as cofactor.

The enzyme catalyses N(6)-[(R)-lipoyl]-L-lysyl-[glycine-cleavage complex H protein] + glycine + H(+) = N(6)-[(R)-S(8)-aminomethyldihydrolipoyl]-L-lysyl-[glycine-cleavage complex H protein] + CO2. Its function is as follows. The glycine cleavage system catalyzes the degradation of glycine. The P protein binds the alpha-amino group of glycine through its pyridoxal phosphate cofactor; CO(2) is released and the remaining methylamine moiety is then transferred to the lipoamide cofactor of the H protein. The protein is Glycine dehydrogenase (decarboxylating) of Chromobacterium violaceum (strain ATCC 12472 / DSM 30191 / JCM 1249 / CCUG 213 / NBRC 12614 / NCIMB 9131 / NCTC 9757 / MK).